The sequence spans 280 residues: F420-dependent methylenetetrahydromethanopterin dehydrogenase (280 aa).

This sequence belongs to the MTD family.

It catalyses the reaction 5,10-methylenetetrahydromethanopterin + oxidized coenzyme F420-(gamma-L-Glu)(n) + 2 H(+) = 5,10-methenyl-5,6,7,8-tetrahydromethanopterin + reduced coenzyme F420-(gamma-L-Glu)(n). It functions in the pathway one-carbon metabolism; methanogenesis from CO(2); 5,10-methylene-5,6,7,8-tetrahydromethanopterin from 5,10-methenyl-5,6,7,8-tetrahydromethanopterin (coenzyme F420 route): step 1/1. Catalyzes the reversible reduction of methenyl-H(4)MPT(+) to methylene-H(4)MPT. This is F420-dependent methylenetetrahydromethanopterin dehydrogenase from Methanoculleus marisnigri (strain ATCC 35101 / DSM 1498 / JR1).